A 471-amino-acid polypeptide reads, in one-letter code: Tryptophan--tRNA ligase, cytoplasmic (471 aa).

Residues 8–64 form the WHEP-TRS domain; the sequence is SLLELFNSIATQGELVRSLKAGNASKDEIDSAVKMLVSLKMSYKAAAGEDYKADCPP. The tract at residues 59 to 79 is disordered; that stretch reads KADCPPGNPAPTSNHGPDATE. Lys154 is modified (N6-succinyllysine). Residues 164-173 carry the 'HIGH' region motif; that stretch reads PSSEAMHVGH. The 'KMSKS' region signature appears at 349-353; sequence KMSAS. Ser351 is modified (phosphoserine).

This sequence belongs to the class-I aminoacyl-tRNA synthetase family. Homodimer. Interacts with an oxidized form of GAPDH. GAPDH stimulates the aminoacylation activity of isoform 2. Proteolytic cleavage generates 2 forms; T1-TrpRS and T2-TrpRS.

The protein resides in the cytoplasm. It carries out the reaction tRNA(Trp) + L-tryptophan + ATP = L-tryptophyl-tRNA(Trp) + AMP + diphosphate + H(+). In terms of biological role, catalyzes the attachment of tryptophan to tRNA(Trp) in a two-step reaction: tryptophan is first activated by ATP to form Trp-AMP and then transferred to the acceptor end of the tRNA(Trp). Functionally, has no angiostatic activity. Possesses an angiostatic activity but has no aminoacylation activity. Inhibits fluid shear stress-activated responses of endothelial cells. Regulates ERK, Akt, and eNOS activation pathways that are associated with angiogenesis, cytoskeletal reorganization and shear stress-responsive gene expression. Its function is as follows. Has an angiostatic activity. The chain is Tryptophan--tRNA ligase, cytoplasmic from Homo sapiens (Human).